Reading from the N-terminus, the 251-residue chain is uncharacterized protein (251 aa).

An N-terminal signal peptide occupies residues Met1 to Gly19. Cys20 carries N-palmitoyl cysteine lipidation. Cys20 carries the S-diacylglycerol cysteine lipid modification.

This sequence belongs to the staphylococcal tandem lipoprotein family.

The protein localises to the cell membrane. This is an uncharacterized protein from Staphylococcus epidermidis (strain ATCC 12228 / FDA PCI 1200).